Here is a 329-residue protein sequence, read N- to C-terminus: Helicase VP6-A (329 aa).

Disordered stretches follow at residues 27 to 130 (INLV…TNGG) and 189 to 232 (DLRR…SEEP). 3 stretches are compositionally biased toward basic and acidic residues: residues 36-58 (EGGKEDKTEPKEESKAEGSKDGE), 65-83 (GQKEEGGKETKDADVDRRI), and 96-109 (SGERANENANRGDG). Lys-110 is a binding site for ATP. Residues 110–129 (KVGGGGGDADAGVGATGTNG) show a composition bias toward gly residues. Basic and acidic residues-rich tracts occupy residues 189-207 (DLRRKEKNGTHAKAVERGG) and 215-232 (HGDAQREGVEEEKTSEEP).

The protein belongs to the reoviruses VP6 family. Homohexamer.

Its subcellular location is the virion. The catalysed reaction is ATP + H2O = ADP + phosphate + H(+). ATP dependent RNA helicase essential for RNA packaging and viral transcription. Possesses ss- and dsRNA-binding capacity. The chain is Helicase VP6-A (Segment-9) from Antilocapra americana (Pronghorn).